A 122-amino-acid polypeptide reads, in one-letter code: Small ribosomal subunit protein uS13c (122 aa).

It belongs to the universal ribosomal protein uS13 family. Part of the 30S ribosomal subunit.

The protein localises to the plastid. It localises to the chloroplast. Located at the top of the head of the 30S subunit, it contacts several helices of the 16S rRNA. The polypeptide is Small ribosomal subunit protein uS13c (Cyanidium caldarium (Red alga)).